Consider the following 213-residue polypeptide: ATP-dependent Clp protease proteolytic subunit (213 aa).

The Nucleophile role is filled by Ser114. His139 is an active-site residue.

This sequence belongs to the peptidase S14 family. As to quaternary structure, fourteen ClpP subunits assemble into 2 heptameric rings which stack back to back to give a disk-like structure with a central cavity, resembling the structure of eukaryotic proteasomes.

Its subcellular location is the cytoplasm. It carries out the reaction Hydrolysis of proteins to small peptides in the presence of ATP and magnesium. alpha-casein is the usual test substrate. In the absence of ATP, only oligopeptides shorter than five residues are hydrolyzed (such as succinyl-Leu-Tyr-|-NHMec, and Leu-Tyr-Leu-|-Tyr-Trp, in which cleavage of the -Tyr-|-Leu- and -Tyr-|-Trp bonds also occurs).. Cleaves peptides in various proteins in a process that requires ATP hydrolysis. Has a chymotrypsin-like activity. Plays a major role in the degradation of misfolded proteins. The protein is ATP-dependent Clp protease proteolytic subunit of Pseudomonas entomophila (strain L48).